The chain runs to 536 residues: Serine protease inhibitor 28Dc (536 aa).

A signal peptide spans 1-16 (MWRLLLALLLVSSVCC). N-linked (GlcNAc...) asparagine glycosylation occurs at asparagine 355.

Belongs to the serpin family.

Its subcellular location is the secreted. Its function is as follows. Serine protease inhibitor which is required for pupal viability and plays an essential role in regulating the melanization reaction. Inhibits spontaneous melanization and appears to be involved in the melanization immune response to physical wounding in larvae and adults. Acts by negatively regulating the Hayan-phenoloxidase (PPO1) cascade in the hemolymph and possibly the trachea. May function by controlling the initial release of the activated form of PPO1, phenoloxidase (PO) and thus maintains PO availability for processes such as wound response and pigmentation. The chain is Serine protease inhibitor 28Dc from Drosophila melanogaster (Fruit fly).